A 504-amino-acid chain; its full sequence is Beta-glucosidase 24 (504 aa).

The first 18 residues, methionine 1–serine 18, serve as a signal peptide directing secretion. Glutamine 47 lines the a beta-D-glucoside pocket. Asparagine 75 is a glycosylation site (N-linked (GlcNAc...) asparagine). Residues histidine 151 and asparagine 196–glutamate 197 contribute to the a beta-D-glucoside site. Catalysis depends on glutamate 197, which acts as the Proton donor. Cysteine 216 and cysteine 224 are disulfide-bonded. A glycan (N-linked (GlcNAc...) asparagine) is linked at asparagine 329. Tyrosine 340 contacts a beta-D-glucoside. N-linked (GlcNAc...) asparagine glycosylation occurs at asparagine 371. An a beta-D-glucoside-binding site is contributed by glutamate 411. Glutamate 411 acts as the Nucleophile in catalysis. A glycan (N-linked (GlcNAc...) asparagine) is linked at asparagine 421. A beta-D-glucoside contacts are provided by residues tryptophan 460, glutamate 467–tryptophan 468, and phenylalanine 476.

It belongs to the glycosyl hydrolase 1 family.

It catalyses the reaction Hydrolysis of terminal, non-reducing beta-D-glucosyl residues with release of beta-D-glucose.. This is Beta-glucosidase 24 (BGLU24) from Oryza sativa subsp. japonica (Rice).